Consider the following 193-residue polypeptide: Phosphoheptose isomerase (193 aa).

Positions 37 to 193 (LAASFKADGK…QLIEKEMASV (157 aa)) constitute an SIS domain. 52-54 (NGG) contacts substrate. Zn(2+) is bound by residues H61 and E65. Substrate is bound by residues E65, 93–94 (ND), 119–121 (STS), S124, and Q172. Residues Q172 and H180 each coordinate Zn(2+).

This sequence belongs to the SIS family. GmhA subfamily. In terms of assembly, homotetramer. Zn(2+) serves as cofactor.

The protein resides in the cytoplasm. The enzyme catalyses 2 D-sedoheptulose 7-phosphate = D-glycero-alpha-D-manno-heptose 7-phosphate + D-glycero-beta-D-manno-heptose 7-phosphate. It participates in carbohydrate biosynthesis; D-glycero-D-manno-heptose 7-phosphate biosynthesis; D-glycero-alpha-D-manno-heptose 7-phosphate and D-glycero-beta-D-manno-heptose 7-phosphate from sedoheptulose 7-phosphate: step 1/1. Its function is as follows. Catalyzes the isomerization of sedoheptulose 7-phosphate in D-glycero-D-manno-heptose 7-phosphate. This Edwardsiella ictaluri (strain 93-146) protein is Phosphoheptose isomerase.